Reading from the N-terminus, the 213-residue chain is MSNEQPKIPQATAKRLPLYYRFLKNLHASGKQRVSSAELSEAVKVDPATIRRDFSYFGALGKKGYGYNVNYLLSFFRRTLEEDEVTEVALFGVGNLGTAFLNYNFSKNNNTKIVMAFDVDERKVGTTVGGVPVYHLDELEERLHENIPVAILTVPAAAAQALTDRLVVQGIKGILNFTPARLNVPNHIRVHHIDLAIELQSLVYFLKNYPSPS.

The segment at residues 18-57 is a DNA-binding region (H-T-H motif); it reads LYYRFLKNLHASGKQRVSSAELSEAVKVDPATIRRDFSYF. Residue 92–97 participates in NAD(+) binding; it reads GVGNLG.

Belongs to the transcriptional regulatory Rex family. As to quaternary structure, homodimer.

The protein resides in the cytoplasm. Its function is as follows. Modulates transcription in response to changes in cellular NADH/NAD(+) redox state. The protein is Redox-sensing transcriptional repressor Rex of Geobacillus kaustophilus (strain HTA426).